The sequence spans 623 residues: Xaa-Pro aminopeptidase 1 (623 aa).

Position 77 (arginine 77) interacts with a peptide. Position 304 is an N6-acetyllysine (lysine 304). Residue histidine 395 participates in a peptide binding. 3 residues coordinate Mn(2+): aspartate 415, aspartate 426, and histidine 489. Residues histidine 489, histidine 498, and glutamate 523 each coordinate a peptide. Mn(2+) contacts are provided by glutamate 523 and glutamate 537.

The protein belongs to the peptidase M24B family. In terms of assembly, homodimer. Requires Mn(2+) as cofactor. As to expression, expressed in all tissues tested, including pancreas, heart, muscle, kidney, liver, lung and brain. Highest levels in pancreas.

It is found in the cytoplasm. It localises to the cytosol. It carries out the reaction Release of any N-terminal amino acid, including proline, that is linked to proline, even from a dipeptide or tripeptide.. Inhibited by apstatin and the metal ion chelators EDTA and 1,10-phenanthroline. Partially inhibited by dithiothreitol. Not inhibited by enalaprilat or amastatin. Specifically inhibited by the pseudodipeptide CQ31. Inhibition by CQ31 indirectly activates the CARD8 inflammasome: dipeptide accumulation following PEPD inactivation weaky inhibit dipeptidyl peptidases DDP8 and DPP9, relieving DPP8- and/or DPP9-mediated inhibition of CARD8. Its function is as follows. Metalloaminopeptidase that catalyzes the removal of a penultimate prolyl residue from the N-termini of peptides, such as Arg-Pro-Pro. Contributes to the degradation of bradykinin. The sequence is that of Xaa-Pro aminopeptidase 1 from Homo sapiens (Human).